We begin with the raw amino-acid sequence, 340 residues long: Ferrochelatase (340 aa).

The Fe cation site is built by His189 and Glu292.

Belongs to the ferrochelatase family.

The protein resides in the cytoplasm. It catalyses the reaction heme b + 2 H(+) = protoporphyrin IX + Fe(2+). It participates in porphyrin-containing compound metabolism; protoheme biosynthesis; protoheme from protoporphyrin-IX: step 1/1. Functionally, catalyzes the ferrous insertion into protoporphyrin IX. The protein is Ferrochelatase of Pseudomonas fluorescens biotype C.